The sequence spans 187 residues: UPF0301 protein ESA_00394 (187 aa).

It belongs to the UPF0301 (AlgH) family.

The protein is UPF0301 protein ESA_00394 of Cronobacter sakazakii (strain ATCC BAA-894) (Enterobacter sakazakii).